The following is a 440-amino-acid chain: Histidinol dehydrogenase homolog 2 (440 aa).

H265 is a binding site for Zn(2+). Residues E333 and H334 each act as proton acceptor in the active site. Position 426 (H426) interacts with Zn(2+).

It belongs to the histidinol dehydrogenase family. The cofactor is Zn(2+).

This Mesorhizobium japonicum (strain LMG 29417 / CECT 9101 / MAFF 303099) (Mesorhizobium loti (strain MAFF 303099)) protein is Histidinol dehydrogenase homolog 2.